Reading from the N-terminus, the 296-residue chain is tRNA dimethylallyltransferase (296 aa).

9-16 (GPTAVGKT) provides a ligand contact to ATP. 11-16 (TAVGKT) provides a ligand contact to substrate. The interval 34–37 (DSRQ) is interaction with substrate tRNA.

Belongs to the IPP transferase family. As to quaternary structure, monomer. It depends on Mg(2+) as a cofactor.

It catalyses the reaction adenosine(37) in tRNA + dimethylallyl diphosphate = N(6)-dimethylallyladenosine(37) in tRNA + diphosphate. Catalyzes the transfer of a dimethylallyl group onto the adenine at position 37 in tRNAs that read codons beginning with uridine, leading to the formation of N6-(dimethylallyl)adenosine (i(6)A). This chain is tRNA dimethylallyltransferase, found in Chloroflexus aurantiacus (strain ATCC 29366 / DSM 635 / J-10-fl).